We begin with the raw amino-acid sequence, 768 residues long: MTIDTTNESDNSPTNSPGLEASARTFSLNASKMVRITDDYADEVFIEQNDVVIEKPRMDPLHVRKLMETWRKAARRARTNYIDPWDEFNIHEYPVQRAKRYRYSAIRKQWTEDIVDVRLHPDSFARGAMRECYRLKKCSKHGTSQDWSSNYVAKRYICQVDRRVLFDDVRLQMDAKLWAEEYNRYNPPKKIDIVQMCVIEMIDVKGSPLYHLEHFIEGKYIKYNSNSGFVSNAARLTPQAFSHFTFERSGHQMMVVDIQGVGDLYTDPQIHTVVGTDYGDGNLGTRGMALFFHSHRCNDICETMDLSNFELSPPEIEATEVAMEVAAKQKKSCIVPPTVFEARRNRISSECVHVEHGISMDQLRKRKTLNQSSTDLSAKSHNEDCVCPECIPVVEQLCEPCSEDEEDEEEDYPRSEKSGNSQKSRRSRMSISTRSSGDESASRPRKCGFVDLNSLRQRHDSFRSSVGTYSMNSSRQTRDTEKDEFWKVLRKQSVPANILSLQLQQMAANLENDEDVPQVTGHQFSVLGQIHIDLSRYHELGRFVEVDSEHKEMLEGSENDARVPIKYDKQSAIFHLDIARKCGILEAVLTSAHIVLGLPHELLKEVTVDDLFPNGFGEQENGIRADKGQKPCDLEEFGSDLMEIAAEMGDKGAMLYMAHAYETGQHLGPNRRTDYKKSIDWYQRVVGFQEEEELDSDCGKTTFSSFAPLTRHEILAKMAEMYKEGGYGLNQDFERAYGLFNEAAEAAMEAMNGKLANKYYEKAEMCGE.

Over residues 1 to 17 (MTIDTTNESDNSPTNSP) the composition is skewed to polar residues. A disordered region spans residues 1–21 (MTIDTTNESDNSPTNSPGLEA). Residues 102-309 (RYSAIRKQWT…ICETMDLSNF (208 aa)) enclose the Alpha-type protein kinase domain. An ATP-binding site is contributed by 279 to 284 (GDGNLG). Acidic residues predominate over residues 402-411 (SEDEEDEEED). The segment at 402 to 446 (SEDEEDEEEDYPRSEKSGNSQKSRRSRMSISTRSSGDESASRPRK) is disordered.

The protein belongs to the protein kinase superfamily. Alpha-type protein kinase family. In terms of assembly, monomer or homodimer. Interacts with cmd-1 in the presence of Ca(2+).

It catalyses the reaction [translation elongation factor 2] + ATP = [translation elongation factor 2]-phosphate + ADP + H(+). Its activity is regulated as follows. Calcium(2+)/calmodulin dependent activity. Undergoes calcium/calmodulin-dependent intramolecular autophosphorylation, and this results in it becoming partially calcium/calmodulin-independent. In terms of biological role, phosphorylates elongation factor-2 (eEF-2) at two threonine residues that are conserved in all eukaryotes and are located within a GTP-binding domain. Calcium(2+)/calmodulin dependent activity. Inactivates eEF-2 by catalyzing its phosphorylation. eEF-2 catalyzes the movement of the ribosome along mRNA during translation in eukaryotic cells. The protein is Eukaryotic elongation factor 2 kinase (efk-1) of Caenorhabditis elegans.